The sequence spans 389 residues: 26S proteasome non-ATPase regulatory subunit 6 (389 aa).

The PCI domain occupies 193–361 (NFKKAASLFL…CVLETNRPDA (169 aa)).

This sequence belongs to the proteasome subunit S10 family.

Acts as a regulatory subunit of the 26S proteasome which is involved in the ATP-dependent degradation of ubiquitinated proteins. This is 26S proteasome non-ATPase regulatory subunit 6 (RPN7) from Oryza sativa subsp. japonica (Rice).